The chain runs to 339 residues: Anthranilate phosphoribosyltransferase (339 aa).

Residues glycine 79, 82-83, threonine 87, 89-92, 107-115, and serine 119 each bind 5-phospho-alpha-D-ribose 1-diphosphate; these read GD, NVST, and KHGNRAVSS. Anthranilate is bound at residue glycine 79. Serine 91 is a Mg(2+) binding site. Residue asparagine 110 coordinates anthranilate. Residue arginine 165 coordinates anthranilate. Residues aspartate 224 and glutamate 225 each contribute to the Mg(2+) site.

It belongs to the anthranilate phosphoribosyltransferase family. As to quaternary structure, homodimer. Requires Mg(2+) as cofactor.

It carries out the reaction N-(5-phospho-beta-D-ribosyl)anthranilate + diphosphate = 5-phospho-alpha-D-ribose 1-diphosphate + anthranilate. It functions in the pathway amino-acid biosynthesis; L-tryptophan biosynthesis; L-tryptophan from chorismate: step 2/5. In terms of biological role, catalyzes the transfer of the phosphoribosyl group of 5-phosphorylribose-1-pyrophosphate (PRPP) to anthranilate to yield N-(5'-phosphoribosyl)-anthranilate (PRA). The protein is Anthranilate phosphoribosyltransferase of Geobacillus kaustophilus (strain HTA426).